We begin with the raw amino-acid sequence, 223 residues long: Glutathione S-transferase alpha I (223 aa).

An N-acetylmethionine modification is found at Met1. Ala2 is modified (N-acetylalanine; in Glutathione S-transferase alpha I, N-terminally processed). Residues 3 to 83 (RKPLLHYFNG…YVANKHNLYG (81 aa)) enclose the GST N-terminal domain. At Lys4 the chain carries N6-succinyllysine. Glutathione is bound by residues Tyr9, Arg45, 54-55 (QV), and 67-68 (QT). In terms of domain architecture, GST C-terminal spans 85–208 (DMKERALIDM…QPGSQRKPPM (124 aa)).

The protein belongs to the GST superfamily. Alpha family. In terms of assembly, homodimer or heterodimer of GSTA1 and GSTA2. In terms of tissue distribution, liver and lung.

It is found in the cytoplasm. It catalyses the reaction RX + glutathione = an S-substituted glutathione + a halide anion + H(+). The enzyme catalyses prostaglandin A2 + glutathione = prostaglandin A2-S-(R)-glutathione. The catalysed reaction is prostaglandin J2 + glutathione = prostaglandin J2-S-(R)-glutathione. It carries out the reaction (13S)-hydroperoxy-(9Z,11E)-octadecadienoate + 2 glutathione = (13S)-hydroxy-(9Z,11E)-octadecadienoate + glutathione disulfide + H2O. It catalyses the reaction androst-5-ene-3,17-dione = androst-4-ene-3,17-dione. Its function is as follows. Glutathione S-transferase that catalyzes the nucleophilic attack of the sulfur atom of glutathione on the electrophilic groups of a wide range of exogenous and endogenous compounds. Involved in the formation of glutathione conjugates of both prostaglandin A2 (PGA2) and prostaglandin J2 (PGJ2). It also catalyzes the isomerization of D5-androstene-3,17-dione (AD) into D4-androstene-3,17-dione and may therefore play an important role in hormone biosynthesis. Through its glutathione-dependent peroxidase activity toward the fatty acid hydroperoxide (13S)-hydroperoxy-(9Z,11E)-octadecadienoate/13-HPODE it is also involved in the metabolism of oxidized linoleic acid. This Oryctolagus cuniculus (Rabbit) protein is Glutathione S-transferase alpha I.